Here is a 192-residue protein sequence, read N- to C-terminus: Peptidyl-tRNA hydrolase (192 aa).

A tRNA-binding site is contributed by tyrosine 17. Residue histidine 22 is the Proton acceptor of the active site. TRNA is bound by residues phenylalanine 67, asparagine 69, and asparagine 115.

Belongs to the PTH family. As to quaternary structure, monomer.

The protein localises to the cytoplasm. It carries out the reaction an N-acyl-L-alpha-aminoacyl-tRNA + H2O = an N-acyl-L-amino acid + a tRNA + H(+). Its function is as follows. Hydrolyzes ribosome-free peptidyl-tRNAs (with 1 or more amino acids incorporated), which drop off the ribosome during protein synthesis, or as a result of ribosome stalling. Catalyzes the release of premature peptidyl moieties from peptidyl-tRNA molecules trapped in stalled 50S ribosomal subunits, and thus maintains levels of free tRNAs and 50S ribosomes. This chain is Peptidyl-tRNA hydrolase, found in Methylobacillus flagellatus (strain ATCC 51484 / DSM 6875 / VKM B-1610 / KT).